Here is a 75-residue protein sequence, read N- to C-terminus: Protein SlyX homolog (75 aa).

The protein belongs to the SlyX family.

This Vibrio campbellii (strain ATCC BAA-1116) protein is Protein SlyX homolog.